We begin with the raw amino-acid sequence, 528 residues long: Sulfhydryl oxidase 1 (528 aa).

Residues 1–19 (MSLIHLFLLLGLLSLEAAA) form the signal peptide. Residues 35–170 (NVADQKDNAI…LLNWINKQIG (136 aa)) form the Thioredoxin domain. Asparagine 47 carries an N-linked (GlcNAc...) asparagine glycan. Residues cysteine 72 and cysteine 75 each act as nucleophile in the active site. Cysteine 72 and cysteine 75 are disulfide-bonded. N-linked (GlcNAc...) asparagine glycans are attached at residues asparagine 186 and asparagine 297. The cysteines at positions 292 and 304 are disulfide-linked. Residues 295 to 397 (SKNETRGFSC…GDPKFPKMIW (103 aa)) enclose the ERV/ALR sulfhydryl oxidase domain. FAD-binding positions include arginine 300, tryptophan 307, histidine 311, aspartate 341, histidine 345, 368–375 (WSTHNKVN), lysine 394, and tryptophan 397. A disulfide bond links cysteine 339 and cysteine 342. Cysteine 403 and cysteine 406 are disulfide-bonded.

It depends on FAD as a cofactor. Highly expressed in roots.

It localises to the secreted. The protein localises to the cell wall. It catalyses the reaction 2 R'C(R)SH + O2 = R'C(R)S-S(R)CR' + H2O2. In terms of biological role, sulfhydryl oxidase involved in the regulation of cation homeostasis. Positively regulates shoot accumulation of K(+) and inhibits accumulation of toxic cations. Acts at the level of root K(+) efflux systems involved in xylem loading (root symplast-xylem interface). The protein is Sulfhydryl oxidase 1 (QSOX1) of Arabidopsis thaliana (Mouse-ear cress).